The chain runs to 171 residues: Phosphopantetheine adenylyltransferase (171 aa).

Position 9 (threonine 9) interacts with substrate. Residues 9-10 (TF) and histidine 17 each bind ATP. Residues lysine 41, leucine 78, and arginine 92 each contribute to the substrate site. Residues 93-95 (GLR), glutamate 103, and 128-134 (HQAIASK) contribute to the ATP site.

Belongs to the bacterial CoaD family. Homohexamer. Mg(2+) serves as cofactor.

It localises to the cytoplasm. It carries out the reaction (R)-4'-phosphopantetheine + ATP + H(+) = 3'-dephospho-CoA + diphosphate. It participates in cofactor biosynthesis; coenzyme A biosynthesis; CoA from (R)-pantothenate: step 4/5. In terms of biological role, reversibly transfers an adenylyl group from ATP to 4'-phosphopantetheine, yielding dephospho-CoA (dPCoA) and pyrophosphate. The polypeptide is Phosphopantetheine adenylyltransferase (Dinoroseobacter shibae (strain DSM 16493 / NCIMB 14021 / DFL 12)).